The following is a 125-amino-acid chain: 14 kDa phosphohistidine phosphatase (125 aa).

An N-acetylalanine modification is found at alanine 2. Lysine 21 lines the substrate pocket. Histidine 53 functions as the Proton acceptor in the catalytic mechanism. 94–96 (SMG) serves as a coordination point for substrate.

Monomer.

The protein resides in the cytoplasm. It catalyses the reaction N(pros)-phospho-L-histidyl-[protein] + H2O = L-histidyl-[protein] + phosphate. The enzyme catalyses N(tele)-phospho-L-histidyl-[protein] + H2O = L-histidyl-[protein] + phosphate. Functionally, exhibits phosphohistidine phosphatase activity. Its function is as follows. May have a significant involvement in neuronal signaling. This is 14 kDa phosphohistidine phosphatase (PHPT1) from Oryctolagus cuniculus (Rabbit).